The chain runs to 392 residues: GTPase Obg (392 aa).

The 159-residue stretch at methionine 1 to leucine 159 folds into the Obg domain. Residues asparagine 127–proline 146 are disordered. Residues arginine 129 to methionine 143 show a composition bias toward polar residues. The OBG-type G domain maps to alanine 160 to lysine 333. Residues glycine 166–serine 173, phenylalanine 191–valine 195, aspartate 213–glycine 216, asparagine 283–aspartate 286, and serine 314–alanine 316 contribute to the GTP site. Residues serine 173 and threonine 193 each contribute to the Mg(2+) site. The segment at glutamine 360 to arginine 392 is disordered. Positions alanine 364 to valine 386 are enriched in acidic residues.

Belongs to the TRAFAC class OBG-HflX-like GTPase superfamily. OBG GTPase family. In terms of assembly, monomer. Mg(2+) is required as a cofactor.

It is found in the cytoplasm. In terms of biological role, an essential GTPase which binds GTP, GDP and possibly (p)ppGpp with moderate affinity, with high nucleotide exchange rates and a fairly low GTP hydrolysis rate. Plays a role in control of the cell cycle, stress response, ribosome biogenesis and in those bacteria that undergo differentiation, in morphogenesis control. In Erwinia tasmaniensis (strain DSM 17950 / CFBP 7177 / CIP 109463 / NCPPB 4357 / Et1/99), this protein is GTPase Obg.